We begin with the raw amino-acid sequence, 151 residues long: Large ribosomal subunit protein uL22 (151 aa).

This sequence belongs to the universal ribosomal protein uL22 family. Part of the 50S ribosomal subunit.

This protein binds specifically to 23S rRNA. It makes multiple contacts with different domains of the 23S rRNA in the assembled 50S subunit and ribosome. Functionally, the globular domain of the protein is located near the polypeptide exit tunnel on the outside of the subunit, while an extended beta-hairpin is found that lines the wall of the exit tunnel in the center of the 70S ribosome. This is Large ribosomal subunit protein uL22 from Thermoplasma acidophilum (strain ATCC 25905 / DSM 1728 / JCM 9062 / NBRC 15155 / AMRC-C165).